The following is a 537-amino-acid chain: Glutamate--tRNA ligase (537 aa).

Residues 9 to 19 (PSPTGLQHIGG) carry the 'HIGH' region motif. Residues Cys-125, Cys-127, Cys-152, and Glu-154 each contribute to the Zn(2+) site. The short motif at 270–274 (KLSKR) is the 'KMSKS' region element. Lys-273 contributes to the ATP binding site.

The protein belongs to the class-I aminoacyl-tRNA synthetase family. Glutamate--tRNA ligase type 1 subfamily. As to quaternary structure, monomer. Zn(2+) serves as cofactor.

Its subcellular location is the cytoplasm. It catalyses the reaction tRNA(Glu) + L-glutamate + ATP = L-glutamyl-tRNA(Glu) + AMP + diphosphate. Its function is as follows. Catalyzes the attachment of glutamate to tRNA(Glu) in a two-step reaction: glutamate is first activated by ATP to form Glu-AMP and then transferred to the acceptor end of tRNA(Glu). The chain is Glutamate--tRNA ligase from Treponema pallidum (strain Nichols).